A 444-amino-acid chain; its full sequence is Protein kinase C and casein kinase substrate in neurons protein 1 (444 aa).

Phosphoserine occurs at positions 2 and 79. An F-BAR domain is found at 13-283 (EETTDSFWEV…AIRGADAQDD (271 aa)). The stretch at 26 to 275 (KRTVKRIDDG…QVYRELEQAI (250 aa)) forms a coiled coil. A Phosphothreonine modification is found at T184. The interval 313–384 (AAKKEKQPKK…NGGSNPFDED (72 aa)) is disordered. Positions 314–324 (AKKEKQPKKAE) are enriched in basic and acidic residues. Over residues 336 to 358 (ESTSQAGDRGSVSSYDRGQTYAT) the composition is skewed to polar residues. Phosphoserine is present on residues S346, S348, S349, S361, and S365. One can recognise an SH3 domain in the interval 385–444 (AKGVRVRALYDYDGQEQDELSFKAGDELTKLGEEDEQGWCRGRLDSGQLGLYPANYVEVV). At Y394 the chain carries Phosphotyrosine. Phosphoserine is present on residues S405 and S430.

This sequence belongs to the PACSIN family. In terms of assembly, homodimer. May form heterooligomers with other PACSINs. Interacts with MAPT. Interacts (via SH3 domain) with SYNJ1 and WASL. Interacts (via SH3 domain) with DNM1; the interaction is reduced by DNM1 phosphorylation. Interacts with DNM2 and DNM3. Interacts with both COBL and DBNL. Identified in a complex composed of COBL, PACSIN1 and WASL. Interacts with EHD1 and EHD3. Interacts with TRPV4. Post-translationally, phosphorylated by casein kinase 2 (CK2) and protein kinase C (PKC).

The protein resides in the cytoplasm. It is found in the cell projection. Its subcellular location is the synapse. It localises to the synaptosome. The protein localises to the ruffle membrane. The protein resides in the membrane. It is found in the cytoplasmic vesicle membrane. Its subcellular location is the cytosol. It localises to the cell membrane. Functionally, binds to membranes via its F-BAR domain and mediates membrane tubulation. Plays a role in the reorganization of the microtubule cytoskeleton via its interaction with MAPT; this decreases microtubule stability and inhibits MAPT-induced microtubule polymerization. Plays a role in cellular transport processes by recruiting DNM1, DNM2 and DNM3 to membranes. Plays a role in the reorganization of the actin cytoskeleton and in neuron morphogenesis via its interaction with COBL and WASL, and by recruiting COBL to the cell cortex. Plays a role in the regulation of neurite formation, neurite branching and the regulation of neurite length. Required for normal synaptic vesicle endocytosis; this process retrieves previously released neurotransmitters to accommodate multiple cycles of neurotransmission. Required for normal excitatory and inhibitory synaptic transmission. In Bos taurus (Bovine), this protein is Protein kinase C and casein kinase substrate in neurons protein 1 (PACSIN1).